Reading from the N-terminus, the 272-residue chain is MSHYLIGDIHGCYSEFKSMLDLINFNLKNDIIWIAGDFIGRGPDSLKVLRLIYKLKRNIFVVLGNHEINLLLLYAKIKKIKEEDKLTEILNAPDLKILISWLRKQPLLKIDKQKKIIMIHAGIIPKWDMSDLITNSKKVECELKSKNYKKFLKFMYIKNNEHKNIWKNNLPEIIKMRLTLNIITRIRYCISETEIDLLHKEHPEKSPNHLIPWFKFKNNITKNYSIVFGHWSSIKDYKTPKNIYGLDTGCCWKGELTALKWDNKLFFKIKSK.

Belongs to the Ap4A hydrolase family.

The catalysed reaction is P(1),P(4)-bis(5'-adenosyl) tetraphosphate + H2O = 2 ADP + 2 H(+). Hydrolyzes diadenosine 5',5'''-P1,P4-tetraphosphate to yield ADP. The sequence is that of Bis(5'-nucleosyl)-tetraphosphatase, symmetrical from Wigglesworthia glossinidia brevipalpis.